The primary structure comprises 385 residues: Tryptophan--tRNA ligase (385 aa).

A 'HIGH' region motif is present at residues 89–98 (PSSKTMHIGH). A 'KMSKS' region motif is present at residues 268–272 (KMSAS).

This sequence belongs to the class-I aminoacyl-tRNA synthetase family. Homodimer.

The enzyme catalyses tRNA(Trp) + L-tryptophan + ATP = L-tryptophyl-tRNA(Trp) + AMP + diphosphate + H(+). The sequence is that of Tryptophan--tRNA ligase from Encephalitozoon cuniculi (strain GB-M1) (Microsporidian parasite).